The sequence spans 336 residues: Homoserine O-acetyltransferase (336 aa).

One can recognise an AB hydrolase-1 domain in the interval 58–321; that stretch reads AILVLHALTG…PHGHDAFLID (264 aa). Catalysis depends on Ser147, which acts as the Nucleophile. Residue Arg204 participates in substrate binding. Catalysis depends on residues Asp286 and His315. Asp316 contributes to the substrate binding site.

It belongs to the AB hydrolase superfamily. MetX family. As to quaternary structure, homodimer.

Its subcellular location is the cytoplasm. The catalysed reaction is L-homoserine + acetyl-CoA = O-acetyl-L-homoserine + CoA. It participates in amino-acid biosynthesis; L-methionine biosynthesis via de novo pathway; O-acetyl-L-homoserine from L-homoserine: step 1/1. Transfers an acetyl group from acetyl-CoA to L-homoserine, forming acetyl-L-homoserine. The polypeptide is Homoserine O-acetyltransferase (Deinococcus geothermalis (strain DSM 11300 / CIP 105573 / AG-3a)).